The chain runs to 315 residues: tRNA-dihydrouridine(16) synthase (315 aa).

FMN is bound by residues 7 to 9 and glutamine 68; that span reads PME. Cysteine 98 serves as the catalytic Proton donor. FMN-binding positions include lysine 139, 199–201, and 223–224; these read NGE and GR.

Belongs to the Dus family. DusC subfamily. The cofactor is FMN.

It carries out the reaction 5,6-dihydrouridine(16) in tRNA + NADP(+) = uridine(16) in tRNA + NADPH + H(+). The enzyme catalyses 5,6-dihydrouridine(16) in tRNA + NAD(+) = uridine(16) in tRNA + NADH + H(+). Functionally, catalyzes the synthesis of 5,6-dihydrouridine (D), a modified base found in the D-loop of most tRNAs, via the reduction of the C5-C6 double bond in target uridines. Specifically modifies U16 in tRNAs. The protein is tRNA-dihydrouridine(16) synthase of Aquipseudomonas alcaligenes (Pseudomonas alcaligenes).